Here is a 734-residue protein sequence, read N- to C-terminus: Photosystem I P700 chlorophyll a apoprotein A2 (734 aa).

8 consecutive transmembrane segments (helical) span residues 46–69 (IFAS…FHVA), 135–158 (LYTG…LHLQ), 175–199 (LNHH…HVAI), 273–291 (MAHH…GHMY), 330–353 (IHFQ…QHMY), 369–395 (AALY…IFFI), 417–439 (AIIS…LYVH), and 517–535 (FLVH…LILV). Residues C559 and C568 each contribute to the [4Fe-4S] cluster site. Helical transmembrane passes span 575–596 (AFYL…YWHW) and 643–665 (LSVW…MFLI). Residues H654, M662, and Y670 each contribute to the chlorophyll a site. W671 provides a ligand contact to phylloquinone. The helical transmembrane segment at 707 to 727 (LVGLAHFSVGYIFTYAAFLIA) threads the bilayer.

The protein belongs to the PsaA/PsaB family. As to quaternary structure, the PsaA/B heterodimer binds the P700 chlorophyll special pair and subsequent electron acceptors. PSI consists of a core antenna complex that captures photons, and an electron transfer chain that converts photonic excitation into a charge separation. The eukaryotic PSI reaction center is composed of at least 11 subunits. The cofactor is P700 is a chlorophyll a/chlorophyll a' dimer, A0 is one or more chlorophyll a, A1 is one or both phylloquinones and FX is a shared 4Fe-4S iron-sulfur center..

It localises to the plastid. It is found in the chloroplast thylakoid membrane. The enzyme catalyses reduced [plastocyanin] + hnu + oxidized [2Fe-2S]-[ferredoxin] = oxidized [plastocyanin] + reduced [2Fe-2S]-[ferredoxin]. Its function is as follows. PsaA and PsaB bind P700, the primary electron donor of photosystem I (PSI), as well as the electron acceptors A0, A1 and FX. PSI is a plastocyanin-ferredoxin oxidoreductase, converting photonic excitation into a charge separation, which transfers an electron from the donor P700 chlorophyll pair to the spectroscopically characterized acceptors A0, A1, FX, FA and FB in turn. Oxidized P700 is reduced on the lumenal side of the thylakoid membrane by plastocyanin. The protein is Photosystem I P700 chlorophyll a apoprotein A2 of Lobularia maritima (Sweet alyssum).